Reading from the N-terminus, the 406-residue chain is Glycosylated lysosomal membrane protein (406 aa).

Residues 1 to 35 form the signal peptide; it reads MRGSVECTWGWGHCAPSPLLLWTLLLFAAPFGLLG. Over 36–372 the chain is Lumenal; sequence EKTRQVSLEV…VDGLSPLVLG (337 aa). Residues Asn-65, Asn-134, Asn-159, Asn-187, and Asn-230 are each glycosylated (N-linked (GlcNAc...) asparagine). A helical transmembrane segment spans residues 373 to 393; the sequence is IMAVALGAPGLMLLGGGLVLL. Topologically, residues 394-406 are cytoplasmic; sequence LHHKKYSEYQSIN. The short motif at 402-406 is the Lysosomal targeting motif element; the sequence is YQSIN.

Belongs to the GLMP family. Interacts (via lumenal domain) with lysosomal protein MFSD1; the interaction starts while both proteins are still in the endoplasmic reticulum and is required for stabilization of MFSD1 in lysosomes but has no direct effect on its targeting to lysosomes or transporter activity. Highly N-glycosylated. N-glycosylation is essential for GLMP stability and for MFSD1 lysosomal localization.

Its subcellular location is the lysosome membrane. In terms of biological role, required to protect lysosomal transporter MFSD1 from lysosomal proteolysis and for MFSD1 lysosomal localization. In Homo sapiens (Human), this protein is Glycosylated lysosomal membrane protein.